Here is a 429-residue protein sequence, read N- to C-terminus: Autophagy-related protein 18 (429 aa).

WD repeat units follow at residues 1–36 (MAMN…KSYE), 69–114 (KRQS…LLYT), 139–182 (PLPQ…AINV), 185–225 (AHRS…KLYQ), 230–269 (SMPS…SSPD), 309–355 (KHNG…AWFK), and 367–407 (VNNG…GGEG). Positions 226 to 230 (FRRGS) match the L/FRRG motif motif. Over residues 262–275 (SHPTSSPDASPSSP) the composition is skewed to low complexity. The segment at 262–308 (SHPTSSPDASPSSPVGRDRSLSQSSSGYSPDRGDLTGDVGSSDFPAR) is disordered.

This sequence belongs to the WD repeat PROPPIN family. In terms of assembly, component of the PI(3,5)P2 regulatory complex.

It localises to the preautophagosomal structure membrane. The protein resides in the vacuole membrane. It is found in the endosome membrane. In terms of biological role, the PI(3,5)P2 regulatory complex regulates both the synthesis and turnover of phosphatidylinositol 3,5-bisphosphate (PtdIns(3,5)P2). Necessary for proper vacuole morphology. Plays an important role in osmotically-induced vacuole fragmentation. Required for cytoplasm to vacuole transport (Cvt) vesicle formation, pexophagy and starvation-induced autophagy. Involved in correct atg9 trafficking to the pre-autophagosomal structure. Might also be involved in premeiotic DNA replication. In Neosartorya fischeri (strain ATCC 1020 / DSM 3700 / CBS 544.65 / FGSC A1164 / JCM 1740 / NRRL 181 / WB 181) (Aspergillus fischerianus), this protein is Autophagy-related protein 18 (atg18).